Consider the following 277-residue polypeptide: 2-dehydro-3-deoxyphosphooctonate aldolase (277 aa).

This sequence belongs to the KdsA family.

The protein localises to the cytoplasm. The catalysed reaction is D-arabinose 5-phosphate + phosphoenolpyruvate + H2O = 3-deoxy-alpha-D-manno-2-octulosonate-8-phosphate + phosphate. It participates in carbohydrate biosynthesis; 3-deoxy-D-manno-octulosonate biosynthesis; 3-deoxy-D-manno-octulosonate from D-ribulose 5-phosphate: step 2/3. It functions in the pathway bacterial outer membrane biogenesis; lipopolysaccharide biosynthesis. This Alkalilimnicola ehrlichii (strain ATCC BAA-1101 / DSM 17681 / MLHE-1) protein is 2-dehydro-3-deoxyphosphooctonate aldolase.